The sequence spans 509 residues: UDP-N-acetylmuramyl-tripeptide synthetase (509 aa).

124 to 130 contacts ATP; it reads GTNGKTS. UDP-N-acetyl-alpha-D-muramoyl-L-alanyl-D-glutamate-binding positions include 164–165, serine 191, and arginine 199; that span reads TT. At lysine 231 the chain carries N6-carboxylysine.

Belongs to the MurCDEF family. MurE subfamily. Post-translationally, carboxylation is probably crucial for Mg(2+) binding and, consequently, for the gamma-phosphate positioning of ATP.

Its subcellular location is the cytoplasm. The protein operates within cell wall biogenesis; peptidoglycan biosynthesis. Functionally, catalyzes the addition of an amino acid to the nucleotide precursor UDP-N-acetylmuramoyl-L-alanyl-D-glutamate (UMAG) in the biosynthesis of bacterial cell-wall peptidoglycan. The protein is UDP-N-acetylmuramyl-tripeptide synthetase of Tropheryma whipplei (strain TW08/27) (Whipple's bacillus).